We begin with the raw amino-acid sequence, 519 residues long: SMR domain-containing protein At5g58720 (519 aa).

Over residues 1–15 (MKQKNQHKKKKKRSC) the composition is skewed to basic residues. 2 disordered regions span residues 1–47 (MKQK…REIE) and 92–128 (ESGDDPSTSSVASGSSGQETASTSEYGAGSSSSCSED). A compositionally biased stretch (basic and acidic residues) spans 28–47 (GNKKDVEEERKDGEGKREIE). Residues 98–127 (STSSVASGSSGQETASTSEYGAGSSSSCSE) are compositionally biased toward low complexity. The Smr domain occupies 428-502 (IDLHGQHVKP…NRGTLLIKLD (75 aa)).

As to quaternary structure, interacts with PRL1.

This is SMR domain-containing protein At5g58720 from Arabidopsis thaliana (Mouse-ear cress).